The following is a 349-amino-acid chain: Hypoxia-inducible factor 1-alpha inhibitor (349 aa).

A compositionally biased stretch (low complexity) spans 1–14 (MAATAAEVAASGSG). A disordered region spans residues 1 to 51 (MAATAAEVAASGSGEAREEAEAPGPAWDESQLRSYSFPTRPIPRLSQSDPR). N-acetylalanine is present on alanine 2. Residues 2 to 125 (AATAAEVAAS…PRSNREEIKF (124 aa)) are interaction with VHL. The 166-residue stretch at 142–307 (ERLYLQQTLN…KGAPTPKRIE (166 aa)) folds into the JmjC domain. Tyrosine 145 contributes to the 2-oxoglutarate binding site. Substrate is bound by residues aspartate 152 and 181–183 (QLT). Threonine 196 contacts 2-oxoglutarate. Residues histidine 199 and aspartate 201 each coordinate Fe cation. Residue 201 to 203 (DEQ) coordinates substrate. Residues asparagine 205 and lysine 214 each contribute to the 2-oxoglutarate site. 238–239 (RQ) serves as a coordination point for substrate. Fe cation is bound at residue histidine 279. Asparagine 294 serves as a coordination point for 2-oxoglutarate. Residues alanine 300 and asparagine 321 each coordinate substrate.

As to quaternary structure, homodimer; homodimerization is essential for catalytic activity. Interacts with VHL and HIF1A. Part of a complex with VHL, HIF1A and HDAC1 or HDAC2 or HDAC3. Interacts with NFKB1 and NFKBIA. Interacts with NOTCH1, NOTCH2 and NOTCH3 but not with NOTCH4. Interacts with ABPA3. Interacts with TNKS2. Interacts with PPP1R12A. Interacts with UBE3A. Interacts with ASB4. Interacts with ANKS3. Interacts with NECAB3; the interaction is indirect and seems to be mediated by APBA3. Fe(2+) serves as cofactor.

The protein resides in the nucleus. Its subcellular location is the cytoplasm. It is found in the perinuclear region. It catalyses the reaction L-asparaginyl-[hypoxia-inducible factor alpha subunit] + 2-oxoglutarate + O2 = (3S)-3-hydroxy-L-asparaginyl-[hypoxia-inducible factor alpha subunit] + succinate + CO2. The catalysed reaction is L-histidyl-[ankyrin-repeat domain protein] + 2-oxoglutarate + O2 = (3S)-3-hydroxy-L-histidyl-[ankyrin-repeat domain protein] + succinate + CO2. It carries out the reaction L-asparaginyl-[ankyrin-repeat domain protein] + 2-oxoglutarate + O2 = (3S)-3-hydroxy-L-asparaginyl-[ankyrin-repeat domain protein] + succinate + CO2. The enzyme catalyses L-aspartyl-[ankyrin-repeat domain protein] + 2-oxoglutarate + O2 = (3S)-3-hydroxy-L-aspartyl-[ankyrin-repeat domain protein] + succinate + CO2. In terms of biological role, hydroxylates HIF-1 alpha at 'Asn-799' in the C-terminal transactivation domain (CAD). Functions as an oxygen sensor and, under normoxic conditions, the hydroxylation prevents interaction of HIF-1 with transcriptional coactivators including Cbp/p300-interacting transactivator. Involved in transcriptional repression through interaction with HIF1A, VHL and histone deacetylases. Hydroxylates specific Asn residues within ankyrin repeat domains (ARD) of NFKB1, NFKBIA, NOTCH1, ASB4, PPP1R12A and several other ARD-containing proteins. Also hydroxylates Asp and His residues within ARDs of ANK1 and TNKS2, respectively. Negatively regulates NOTCH1 activity, accelerating myogenic differentiation. Positively regulates ASB4 activity, promoting vascular differentiation. The polypeptide is Hypoxia-inducible factor 1-alpha inhibitor (Hif1an) (Mus musculus (Mouse)).